A 662-amino-acid chain; its full sequence is Eukaryotic peptide chain release factor GTP-binding subunit (662 aa).

Residues Met1–Asp220 form a disordered region. Positions Ala26 to Pro40 are enriched in low complexity. Residues Tyr62–Thr89 show a composition bias toward polar residues. Over residues Asp91–Lys102 the composition is skewed to basic and acidic residues. Positions Gly122–Ile134 are enriched in polar residues. The segment covering Thr141 to Thr158 has biased composition (low complexity). Phosphothreonine is present on Thr182. Low complexity predominate over residues Ala192–Thr213. Residues Lys236 to Lys464 enclose the tr-type G domain. The interval Gly245–Ser252 is G1. Residue Gly245–Ser252 coordinates GTP. The tract at residues Gly301–Glu305 is G2. A G3 region spans residues Asp322–Gly325. Residues Asn384–Asp387 and Ala428–Tyr429 each bind GTP. The tract at residues Asn384–Asp387 is G4. The segment at Ser427–Tyr429 is G5. Ser539 is subject to Phosphoserine.

This sequence belongs to the TRAFAC class translation factor GTPase superfamily. Classic translation factor GTPase family. ERF3 subfamily. In terms of assembly, component of the eRF1-eRF3-GTP ternary complex, composed of sup45/eRF1, sup35/eRF3 and GTP.

It is found in the cytoplasm. It carries out the reaction GTP + H2O = GDP + phosphate + H(+). In terms of biological role, GTPase component of the eRF1-eRF3-GTP ternary complex, a ternary complex that mediates translation termination in response to the termination codons. Sup35/eRF3 mediates sup45/ERF1 delivery to stop codons: The eRF1-eRF3-GTP complex binds to a stop codon in the ribosomal A-site. GTP hydrolysis by sup35/eRF3 induces a conformational change that leads to its dissociation, permitting sup45/eRF1 to accommodate fully in the A-site. The protein is Eukaryotic peptide chain release factor GTP-binding subunit (sup35) of Schizosaccharomyces pombe (strain 972 / ATCC 24843) (Fission yeast).